We begin with the raw amino-acid sequence, 434 residues long: Enolase (434 aa).

Substrate-binding residues include His158 and Glu167. The active-site Proton donor is the Glu210. Positions 245, 294, and 319 each coordinate Mg(2+). Substrate contacts are provided by Glu294 and Asp319. The active-site Proton acceptor is Lys344. Residues 371-374 (SHRS) and Lys395 each bind substrate.

It belongs to the enolase family. As to quaternary structure, homodimer. It depends on Mg(2+) as a cofactor.

The protein localises to the cytoplasm. The enzyme catalyses (2R)-2-phosphoglycerate = phosphoenolpyruvate + H2O. The protein operates within carbohydrate degradation; glycolysis; pyruvate from D-glyceraldehyde 3-phosphate: step 4/5. The polypeptide is Enolase (ENO) (Schistosoma japonicum (Blood fluke)).